A 122-amino-acid polypeptide reads, in one-letter code: MIQMQTILDVADNSGAKKLFCIKVLGGSKRKYAGVGDIVVCSVREALPNSKVKKGDVVKAVIVRTAKELGRPDGSYIRFDNNSGVVINNAKEPVGTRIFGPVARELRAKKFMKIISLAPEVL.

The protein belongs to the universal ribosomal protein uL14 family. Part of the 50S ribosomal subunit. Forms a cluster with proteins L3 and L19. In the 70S ribosome, L14 and L19 interact and together make contacts with the 16S rRNA in bridges B5 and B8.

Functionally, binds to 23S rRNA. Forms part of two intersubunit bridges in the 70S ribosome. The protein is Large ribosomal subunit protein uL14 of Trichlorobacter lovleyi (strain ATCC BAA-1151 / DSM 17278 / SZ) (Geobacter lovleyi).